A 126-amino-acid polypeptide reads, in one-letter code: Histone H2B 5 (126 aa).

The segment covering 1 to 12 (MPEPAKSAPAPK) has biased composition (low complexity). The tract at residues 1 to 35 (MPEPAKSAPAPKKGSKKAVTKTQKKGDKKRRKSRK) is disordered. N6-acetyllysine occurs at positions 6 and 13. Residues 13–34 (KGSKKAVTKTQKKGDKKRRKSR) are compositionally biased toward basic residues. Serine 15 bears the Phosphoserine mark. N6-acetyllysine is present on residues lysine 16 and lysine 21. Serine 113 carries O-linked (GlcNAc) serine glycosylation. Residue lysine 121 forms a Glycyl lysine isopeptide (Lys-Gly) (interchain with G-Cter in ubiquitin) linkage.

The protein belongs to the histone H2B family. In terms of assembly, the nucleosome is a histone octamer containing two molecules each of H2A, H2B, H3 and H4 assembled in one H3-H4 heterotetramer and two H2A-H2B heterodimers. The octamer wraps approximately 147 bp of DNA. Post-translationally, monoubiquitination of Lys-121 by the BRE1 gives a specific tag for epigenetic transcriptional activation and is also prerequisite for histone H3 'Lys-4' and 'Lys-79' methylation. In terms of processing, phosphorylated on Ser-15 during apoptosis; which facilitates apoptotic chromatin condensation. GlcNAcylation at Ser-113 promotes monoubiquitination of Lys-121. It fluctuates in response to extracellular glucose, and associates with transcribed genes.

It is found in the nucleus. It localises to the chromosome. In terms of biological role, core component of nucleosome. Nucleosomes wrap and compact DNA into chromatin, limiting DNA accessibility to the cellular machineries which require DNA as a template. Histones thereby play a central role in transcription regulation, DNA repair, DNA replication and chromosomal stability. DNA accessibility is regulated via a complex set of post-translational modifications of histones, also called histone code, and nucleosome remodeling. The polypeptide is Histone H2B 5 (H2B-V) (Gallus gallus (Chicken)).